We begin with the raw amino-acid sequence, 313 residues long: Porphobilinogen deaminase (313 aa).

S-(dipyrrolylmethanemethyl)cysteine is present on Cys242.

This sequence belongs to the HMBS family. Monomer. Dipyrromethane is required as a cofactor.

The catalysed reaction is 4 porphobilinogen + H2O = hydroxymethylbilane + 4 NH4(+). Its pathway is porphyrin-containing compound metabolism; protoporphyrin-IX biosynthesis; coproporphyrinogen-III from 5-aminolevulinate: step 2/4. Functionally, tetrapolymerization of the monopyrrole PBG into the hydroxymethylbilane pre-uroporphyrinogen in several discrete steps. In Pseudomonas aeruginosa (strain UCBPP-PA14), this protein is Porphobilinogen deaminase.